Consider the following 1373-residue polypeptide: Disease resistance protein RRS1 (1373 aa).

The TIR domain maps to 5–146; the sequence is EKDEEFVCIS…EIVRDVYETH (142 aa). Residues 170–421 enclose the NB-ARC domain; the sequence is IGIRCVGIWG…LLEGCGFFPH (252 aa). Residue 179-186 participates in ATP binding; that stretch reads GMPGIGKT. 9 LRR repeats span residues 498–522, 535–553, 554–575, 577–598, 621–646, 665–688, 742–766, 768–793, and 831–854; these read SEEIEGLFLDTSNLRFDLQPSAFKN, NPEVHPVINFPTGSLHSLP, NELRLLHWENYPLKSLPQNFDP, HLVEINMPYSQLQKLWGGTKNL, AENLEVIDLQGCTRLQNFPAAGRLLR, PPNIEKLHLQGTGILALPVSTVKP, LPNMANLDLNVLDLSGCSSLNSIQG, PRFLKQLYLGGTAIREVPQLPQSLEI, and PRNLKELYFAGTTLREVPQLPLSL. A Nuclear localization signal motif is present at residues 988 to 1005; the sequence is RNFHCWAPGKVVPKVRKD. The WRKY DNA-binding region spans 1204 to 1272; it reads IPAIDEGDLW…YLSEHNHPRP (69 aa). Residues 1300-1323 form a disordered region; sequence RVFQNKDEPNKPHLPSSSTPPGNA.

Interacts with PopP2, a R.solanacearum type III effector.

It localises to the nucleus. In terms of biological role, transcription factor. Interacts specifically with the W box (5'-(T)TGAC[CT]-3'), a frequently occurring elicitor-responsive cis-acting element. Also acts as a disease resistance protein involved in resistance to fungal and bacterial pathogens, including R.solanacearum, P.syringae pv. tomato and C.higginsianum. In presence of RPS4, elicites an EDS1-dependent hypersensitive response. In Arabidopsis thaliana (Mouse-ear cress), this protein is Disease resistance protein RRS1.